An 82-amino-acid polypeptide reads, in one-letter code: DinI-like protein (82 aa).

It belongs to the DinI family.

In Enterobacteria phage VT1-Sakai, this protein is DinI-like protein.